A 232-amino-acid chain; its full sequence is 5'-methylthioadenosine/S-adenosylhomocysteine nucleosidase (232 aa).

Glutamate 12 acts as the Proton acceptor in catalysis. Substrate is bound by residues glycine 78, isoleucine 152, and 173–174; that span reads ME. Aspartate 197 acts as the Proton donor in catalysis.

The protein belongs to the PNP/UDP phosphorylase family. MtnN subfamily. As to quaternary structure, homodimer.

It carries out the reaction S-adenosyl-L-homocysteine + H2O = S-(5-deoxy-D-ribos-5-yl)-L-homocysteine + adenine. It catalyses the reaction S-methyl-5'-thioadenosine + H2O = 5-(methylsulfanyl)-D-ribose + adenine. The catalysed reaction is 5'-deoxyadenosine + H2O = 5-deoxy-D-ribose + adenine. It participates in amino-acid biosynthesis; L-methionine biosynthesis via salvage pathway; S-methyl-5-thio-alpha-D-ribose 1-phosphate from S-methyl-5'-thioadenosine (hydrolase route): step 1/2. In terms of biological role, catalyzes the irreversible cleavage of the glycosidic bond in both 5'-methylthioadenosine (MTA) and S-adenosylhomocysteine (SAH/AdoHcy) to adenine and the corresponding thioribose, 5'-methylthioribose and S-ribosylhomocysteine, respectively. Also cleaves 5'-deoxyadenosine, a toxic by-product of radical S-adenosylmethionine (SAM) enzymes, into 5-deoxyribose and adenine. Thus, is required for in vivo function of the radical SAM enzymes biotin synthase and lipoic acid synthase, that are inhibited by 5'-deoxyadenosine accumulation. In Erwinia tasmaniensis (strain DSM 17950 / CFBP 7177 / CIP 109463 / NCPPB 4357 / Et1/99), this protein is 5'-methylthioadenosine/S-adenosylhomocysteine nucleosidase.